Here is a 64-residue protein sequence, read N- to C-terminus: Small ribosomal subunit protein eS17 (64 aa).

The protein belongs to the eukaryotic ribosomal protein eS17 family.

This chain is Small ribosomal subunit protein eS17, found in Methanococcoides burtonii (strain DSM 6242 / NBRC 107633 / OCM 468 / ACE-M).